A 135-amino-acid polypeptide reads, in one-letter code: Immunity protein RhsIA (135 aa).

The interval 58–77 (RKQGRQISLSCGEPPEYSPD) is disordered.

In terms of biological role, immunity component of a toxin-immunity protein module, which functions as a cellular contact-dependent growth inhibition (CDI) system. Specifically inhibits its cognate toxin RhsA. Cell contact is necessary for growth inhibition. This is Immunity protein RhsIA (rhsIA) from Dickeya dadantii (strain 3937) (Erwinia chrysanthemi (strain 3937)).